Consider the following 526-residue polypeptide: Phosphoenolpyruvate carboxykinase (ATP) (526 aa).

Substrate contacts are provided by R55, Y190, and K196. Residues K196, H215, and 231 to 239 (GLSGTGKTT) each bind ATP. Mn(2+) is bound by residues K196 and H215. D252 lines the Mn(2+) pocket. Residues E280, R317, and T442 each contribute to the ATP site. R317 contributes to the substrate binding site.

This sequence belongs to the phosphoenolpyruvate carboxykinase (ATP) family. Requires Mn(2+) as cofactor.

It localises to the cytoplasm. The enzyme catalyses oxaloacetate + ATP = phosphoenolpyruvate + ADP + CO2. Its pathway is carbohydrate biosynthesis; gluconeogenesis. Its function is as follows. Involved in the gluconeogenesis. Catalyzes the conversion of oxaloacetate (OAA) to phosphoenolpyruvate (PEP) through direct phosphoryl transfer between the nucleoside triphosphate and OAA. The polypeptide is Phosphoenolpyruvate carboxykinase (ATP) (Alkaliphilus oremlandii (strain OhILAs) (Clostridium oremlandii (strain OhILAs))).